Here is a 177-residue protein sequence, read N- to C-terminus: Mitochondrial inner membrane protease subunit 2 (177 aa).

Active-site residues include S41 and K91. Residues 134-152 (TFGPISSGLVIGKAITIVW) form a helical membrane-spanning segment.

It belongs to the peptidase S26 family. IMP2 subfamily. In terms of assembly, component of the mitochondrial inner membrane peptidase (IMP) complex which at least consists of IMP1, IMP2 and SOM1. The N-terminus is blocked.

Its subcellular location is the mitochondrion inner membrane. Catalytic component of the mitochondrial inner membrane peptidase (IMP) complex. IMP catalyzes the removal of signal peptides required for the targeting of proteins from the mitochondrial matrix, across the inner membrane, into the inter-membrane space. The two catalytic IMP subunits seem to have non-overlapping substrate specificities. IMP2 substrates include nuclear encoded CYB2, mitochondrially encoded COX2 and cytochrome c1. Required for the stability of IMP1. This Saccharomyces cerevisiae (strain ATCC 204508 / S288c) (Baker's yeast) protein is Mitochondrial inner membrane protease subunit 2 (IMP2).